The chain runs to 152 residues: Cell division protein SepF (152 aa).

The interval 25–54 (EEREPVQEEKGTKDKAAFQERPQTGKQNVV) is disordered. A compositionally biased stretch (basic and acidic residues) spans 28–42 (EPVQEEKGTKDKAAF).

The protein belongs to the SepF family. In terms of assembly, homodimer. Interacts with FtsZ.

Its subcellular location is the cytoplasm. In terms of biological role, cell division protein that is part of the divisome complex and is recruited early to the Z-ring. Probably stimulates Z-ring formation, perhaps through the cross-linking of FtsZ protofilaments. Its function overlaps with FtsA. The protein is Cell division protein SepF of Bacillus pumilus (strain SAFR-032).